We begin with the raw amino-acid sequence, 365 residues long: MTQQTPLFAQHQASGARMVDFHGWMMPLHYGSQMDEHHAVRRDAGMFDVSHMTIVDLHGARTREFLRYLLANDVAKLTQPGKALYSAMLNASAGVIDDLIVYFISEDFFRLVVNSATREKDLAWIVEHAAAYGVQLTERDDLSLIAVQGPNAQQKAQSVFDDAQRDAVSAMKPFFGVQAGELFIATTGYTGEPGYEIALPNELAAEFWQQLLAAGVRPAGLGARDTLRLEAGMNLYGQEMDEKVSPLAANMSWTIGWEPSDRQFIGREMLEIQRTKGTERLVGLIMTEKGVLRNALPVRFSDADGNMLEGVITSGSFSPTLGCSIALARVPAGIGEQAVVQIRNRAMPVTVTKPVFVRAGKPVTN.

The protein belongs to the GcvT family. The glycine cleavage system is composed of four proteins: P, T, L and H.

It carries out the reaction N(6)-[(R)-S(8)-aminomethyldihydrolipoyl]-L-lysyl-[protein] + (6S)-5,6,7,8-tetrahydrofolate = N(6)-[(R)-dihydrolipoyl]-L-lysyl-[protein] + (6R)-5,10-methylene-5,6,7,8-tetrahydrofolate + NH4(+). The glycine cleavage system catalyzes the degradation of glycine. This is Aminomethyltransferase from Erwinia tasmaniensis (strain DSM 17950 / CFBP 7177 / CIP 109463 / NCPPB 4357 / Et1/99).